Reading from the N-terminus, the 96-residue chain is Integration host factor subunit beta (96 aa).

It belongs to the bacterial histone-like protein family. In terms of assembly, heterodimer of an alpha and a beta chain.

In terms of biological role, this protein is one of the two subunits of integration host factor, a specific DNA-binding protein that functions in genetic recombination as well as in transcriptional and translational control. This chain is Integration host factor subunit beta, found in Photobacterium profundum (strain SS9).